Reading from the N-terminus, the 34-residue chain is Photosystem II reaction center protein M (34 aa).

The chain crosses the membrane as a helical span at residues 5–25 (ILAFIATTLFVLVPTAFLLII).

Belongs to the PsbM family. PSII is composed of 1 copy each of membrane proteins PsbA, PsbB, PsbC, PsbD, PsbE, PsbF, PsbH, PsbI, PsbJ, PsbK, PsbL, PsbM, PsbT, PsbX, PsbY, PsbZ, Psb30/Ycf12, at least 3 peripheral proteins of the oxygen-evolving complex and a large number of cofactors. It forms dimeric complexes.

It is found in the plastid. The protein resides in the chloroplast thylakoid membrane. One of the components of the core complex of photosystem II (PSII). PSII is a light-driven water:plastoquinone oxidoreductase that uses light energy to abstract electrons from H(2)O, generating O(2) and a proton gradient subsequently used for ATP formation. It consists of a core antenna complex that captures photons, and an electron transfer chain that converts photonic excitation into a charge separation. This subunit is found at the monomer-monomer interface. In Citrus sinensis (Sweet orange), this protein is Photosystem II reaction center protein M.